Here is a 211-residue protein sequence, read N- to C-terminus: ATP phosphoribosyltransferase (211 aa).

Belongs to the ATP phosphoribosyltransferase family. Short subfamily. As to quaternary structure, heteromultimer composed of HisG and HisZ subunits.

It localises to the cytoplasm. It carries out the reaction 1-(5-phospho-beta-D-ribosyl)-ATP + diphosphate = 5-phospho-alpha-D-ribose 1-diphosphate + ATP. Its pathway is amino-acid biosynthesis; L-histidine biosynthesis; L-histidine from 5-phospho-alpha-D-ribose 1-diphosphate: step 1/9. In terms of biological role, catalyzes the condensation of ATP and 5-phosphoribose 1-diphosphate to form N'-(5'-phosphoribosyl)-ATP (PR-ATP). Has a crucial role in the pathway because the rate of histidine biosynthesis seems to be controlled primarily by regulation of HisG enzymatic activity. The protein is ATP phosphoribosyltransferase of Pseudomonas syringae pv. syringae (strain B728a).